The sequence spans 200 residues: Ribosome maturation factor RimP (200 aa).

This sequence belongs to the RimP family.

It localises to the cytoplasm. In terms of biological role, required for maturation of 30S ribosomal subunits. The protein is Ribosome maturation factor RimP of Polaromonas sp. (strain JS666 / ATCC BAA-500).